The chain runs to 1192 residues: DNA topoisomerase 2 (1192 aa).

ATP-binding positions include N64, N95, and 142–149 (GTNGVGLK). Mg(2+) contacts are provided by E438, D539, and D541. One can recognise a Topo IIA-type catalytic domain in the interval 707 to 1174 (IPNFLDGMTR…PGASVWLEEI (468 aa)). The active-site O-(5'-phospho-DNA)-tyrosine intermediate is Y800.

It belongs to the type II topoisomerase family. It depends on Mg(2+) as a cofactor. Requires Mn(2+) as cofactor. The cofactor is Ca(2+).

The protein resides in the host cytoplasm. The catalysed reaction is ATP-dependent breakage, passage and rejoining of double-stranded DNA.. Type II topoisomerase. Processively relaxes supercoiled DNA. Displays DNA-supercoiling activity only when associated with the viral histone-like protein. This African swine fever virus (isolate Tick/South Africa/Pretoriuskop Pr4/1996) (ASFV) protein is DNA topoisomerase 2.